The sequence spans 275 residues: 4-hydroxy-tetrahydrodipicolinate reductase (275 aa).

Residues Gly-13–Met-18, Gly-108–Thr-110, and Ala-134–Phe-137 each bind NAD(+). The active-site Proton donor/acceptor is His-164. His-165 is a (S)-2,3,4,5-tetrahydrodipicolinate binding site. Lys-168 serves as the catalytic Proton donor. Gly-174–Thr-175 is a binding site for (S)-2,3,4,5-tetrahydrodipicolinate.

Belongs to the DapB family.

It is found in the cytoplasm. The catalysed reaction is (S)-2,3,4,5-tetrahydrodipicolinate + NAD(+) + H2O = (2S,4S)-4-hydroxy-2,3,4,5-tetrahydrodipicolinate + NADH + H(+). It catalyses the reaction (S)-2,3,4,5-tetrahydrodipicolinate + NADP(+) + H2O = (2S,4S)-4-hydroxy-2,3,4,5-tetrahydrodipicolinate + NADPH + H(+). It functions in the pathway amino-acid biosynthesis; L-lysine biosynthesis via DAP pathway; (S)-tetrahydrodipicolinate from L-aspartate: step 4/4. Catalyzes the conversion of 4-hydroxy-tetrahydrodipicolinate (HTPA) to tetrahydrodipicolinate. In Synechocystis sp. (strain ATCC 27184 / PCC 6803 / Kazusa), this protein is 4-hydroxy-tetrahydrodipicolinate reductase.